The following is a 200-amino-acid chain: Dual-action ribosomal maturation protein DarP (200 aa).

2 disordered regions span residues 1–25 and 177–200; these read MTRK…DRPS and TASG…DDEA. The segment covering 12–25 has biased composition (basic and acidic residues); that stretch reads HAAEVDDNGYDRPS. The segment covering 184–200 has biased composition (acidic residues); the sequence is GDDEAADEAGDDHDDEA.

This sequence belongs to the DarP family.

Its subcellular location is the cytoplasm. In terms of biological role, member of a network of 50S ribosomal subunit biogenesis factors which assembles along the 30S-50S interface, preventing incorrect 23S rRNA structures from forming. Promotes peptidyl transferase center (PTC) maturation. The chain is Dual-action ribosomal maturation protein DarP from Burkholderia ambifaria (strain MC40-6).